A 543-amino-acid chain; its full sequence is Small conductance calcium-activated potassium channel protein 1 (543 aa).

Positions 1 to 92 (MNSHSYNGSV…SGKPSNVGHR (92 aa)) are disordered. Residues 65-76 (DQDDDEDDEEDE) show a composition bias toward acidic residues. The helical transmembrane segment at 111 to 131 (LIFGMFGIVVMVTETELSWGV) threads the bilayer. The helical transmembrane segment at 140–160 (FALKCLISLSTAILLGLVVLY) threads the bilayer. Residues 179 to 199 (IAMTCERVFLISLELAVCAIH) form a helical membrane-spanning segment. Residues 228–248 (VLLSIPMFLRLYLLGRVMLLH) traverse the membrane as a helical segment. A helical transmembrane segment spans residues 277–297 (LMTICPGTVLLVFSISSWIIA). The pore-forming intramembrane region spans 317 to 337 (FLGAMWLISITFLSIGYGDMV). A helical membrane pass occupies residues 346–366 (VCLLTGIMGAGCTALVVAVVA). The tract at residues 384 to 463 (DTQLTKRVKN…LTDLAKTQTV (80 aa)) is calmodulin-binding. Positions 505-543 (QAIRPPPPPLPPRPGPGPQDQAARSSPCRWTPVAPSDCG) are disordered. The segment covering 508 to 521 (RPPPPPLPPRPGPG) has biased composition (pro residues).

The protein belongs to the potassium channel KCNN family. KCa2.1/KCNN1 subfamily. Homodimer. Heteromultimer with KCNN2 and KCNN3. The complex is composed of 4 channel subunits each of which binds to a calmodulin subunit which regulates the channel activity through calcium-binding. Interacts with calmodulin.

The protein resides in the membrane. It is found in the cytoplasm. Its subcellular location is the myofibril. The protein localises to the sarcomere. It localises to the z line. It catalyses the reaction K(+)(in) = K(+)(out). With respect to regulation, inhibited by bee venom neurotoxin apamin. Inhibited by d-tubocurarine and tetraethylammonium (TEA). Small conductance calcium-activated potassium channel that mediates the voltage-independent transmembrane transfer of potassium across the cell membrane through a constitutive interaction with calmodulin which binds the intracellular calcium allowing its opening. The current is characterized by a voltage-independent activation, an intracellular calcium concentration increase-dependent activation and a single-channel conductance of about 3 picosiemens. Also presents an inwardly rectifying current, thus reducing its already small outward conductance of potassium ions, which is particularly the case when the membrane potential displays positive values, above + 20 mV. Activation is followed by membrane hyperpolarization. Thought to regulate neuronal excitability by contributing to the slow component of synaptic afterhyperpolarization. The protein is Small conductance calcium-activated potassium channel protein 1 of Homo sapiens (Human).